The sequence spans 369 residues: Anhydro-N-acetylmuramic acid kinase (369 aa).

ATP is bound at residue 12-19 (GTSLDGVD).

The protein belongs to the anhydro-N-acetylmuramic acid kinase family.

It catalyses the reaction 1,6-anhydro-N-acetyl-beta-muramate + ATP + H2O = N-acetyl-D-muramate 6-phosphate + ADP + H(+). The protein operates within amino-sugar metabolism; 1,6-anhydro-N-acetylmuramate degradation. Its pathway is cell wall biogenesis; peptidoglycan recycling. Functionally, catalyzes the specific phosphorylation of 1,6-anhydro-N-acetylmuramic acid (anhMurNAc) with the simultaneous cleavage of the 1,6-anhydro ring, generating MurNAc-6-P. Is required for the utilization of anhMurNAc either imported from the medium or derived from its own cell wall murein, and thus plays a role in cell wall recycling. The polypeptide is Anhydro-N-acetylmuramic acid kinase (Escherichia coli (strain SMS-3-5 / SECEC)).